Here is a 244-residue protein sequence, read N- to C-terminus: Inner kinetochore subunit fta7 (244 aa).

The protein belongs to the CENP-Q/OKP1 family. In terms of assembly, component of the heterotetrameric kinetochore subcomplex COMA, which consists of fta2, fta7, mal2 and mis17. The COMA subcomplex is part of a larger constitutive centromere-associated network (CCAN) (also known as central kinetochore Sim4 complex in fission yeast), which is composed of at least cnl2, cnp3, cnp20, fta1, fta2, fta3, fta4, fta6, fta7, mal2, mhf1, mhf2, mis6, mis15, mis17, sim4 and wip1.

It localises to the nucleus. The protein resides in the chromosome. Its subcellular location is the centromere. It is found in the kinetochore. The protein localises to the cytoplasm. It localises to the cytoskeleton. The protein resides in the microtubule organizing center. Its subcellular location is the spindle pole body. Component of the kinetochore, a multiprotein complex that assembles on centromeric DNA and attaches chromosomes to spindle microtubules, mediating chromosome segregation and sister chromatid segregation during meiosis and mitosis. Component of the inner kinetochore COMA complex, which connects centromere-associated proteins and the outer kinetochore. COMA interacts with other inner kinetochore proteins to form the inner kinetochore constitutive centromere-associated network (CCAN), which serves as a structural platform for outer kinetochore assembly. This Schizosaccharomyces pombe (strain 972 / ATCC 24843) (Fission yeast) protein is Inner kinetochore subunit fta7 (fta7).